Reading from the N-terminus, the 240-residue chain is Ribosomal RNA large subunit methyltransferase E (240 aa).

Residues 1–13 (MAKKPGSQNTSGR) show a composition bias toward polar residues. A disordered region spans residues 1–20 (MAKKPGSQNTSGRGQRDLKV). Gly85, Trp87, Asp113, Asp129, and Asp153 together coordinate S-adenosyl-L-methionine. The active-site Proton acceptor is the Lys193.

This sequence belongs to the class I-like SAM-binding methyltransferase superfamily. RNA methyltransferase RlmE family.

It localises to the cytoplasm. The catalysed reaction is uridine(2552) in 23S rRNA + S-adenosyl-L-methionine = 2'-O-methyluridine(2552) in 23S rRNA + S-adenosyl-L-homocysteine + H(+). Functionally, specifically methylates the uridine in position 2552 of 23S rRNA at the 2'-O position of the ribose in the fully assembled 50S ribosomal subunit. This is Ribosomal RNA large subunit methyltransferase E from Roseobacter denitrificans (strain ATCC 33942 / OCh 114) (Erythrobacter sp. (strain OCh 114)).